Reading from the N-terminus, the 664-residue chain is Cyclic nucleotide-gated channel alpha-2 (664 aa).

The segment covering 1–10 (MMTEKSNGVK) has biased composition (polar residues). Residues 1 to 61 (MMTEKSNGVK…LQRLAEMDTP (61 aa)) are disordered. Over 1–146 (MMTEKSNGVK…PAGDWYYRWL (146 aa)) the chain is Cytoplasmic. A helical membrane pass occupies residues 147–168 (FVIAMPVLYNWCLLVARACFSD). At 169–178 (LQRNYFVVWL) the chain is on the extracellular side. The chain crosses the membrane as a helical span at residues 179–199 (VLDYFSDTVYIADLIIRLRTG). The Cytoplasmic portion of the chain corresponds to 200-224 (FLEQGLLVKDPKKLRDNYIHTLQFK). A helical membrane pass occupies residues 225–243 (LDVASIIPTDLIYFAVGIH). Residues 244–248 (SPEVR) lie on the Extracellular side of the membrane. The chain crosses the membrane as a helical span at residues 249-267 (FNRLLHFARMFEFFDRTET). Over 268–274 (RTSYPNI) the chain is Cytoplasmic. The segment at 272–380 (PNIFRISNLV…GNVGSMISNM (109 aa)) is ion conduction pathway. The chain crosses the membrane as a helical span at residues 275-298 (FRISNLVLYILVIIHWNACIYYAI). Residues 299 to 321 (SKSIGFGVDTWVYPNITDPEYGY) are Extracellular-facing. Helical transmembrane passes span 322 to 356 (LARE…LFVI) and 357 to 381 (FDFL…SNMN). The interval 339–342 (TIGE) is selectivity filter. Residues 382–458 (ATRAEFQAKI…STLKKVRIFQ (77 aa)) form a C-linker region. At 382-664 (ATRAEFQAKI…INTPEPAVAE (283 aa)) the chain is on the cytoplasmic side. Positions 462-582 (AGLLVELVLK…EERGREILMK (121 aa)) are cyclic nucleotide-binding domain. 3',5'-cyclic GMP is bound by residues Gly522, Ser525, Arg538, and Thr539. 3',5'-cyclic AMP-binding residues include Arg538 and Thr539. A coiled-coil region spans residues 599–653 (VQEKLEQLETNMETLYTRFARLLAEYTGAQQKLKQRITVLETKMKQNHEDDYLSD).

Belongs to the cyclic nucleotide-gated cation channel (TC 1.A.1.5) family. CNGA2 subfamily. As to quaternary structure, the olfactory cyclic nucleotide-gated channel is an heterotetramer composed of CNGA2, CNGA4 and CNGB1b subunits with 2:1:1 stoichiometry.

It localises to the cell projection. It is found in the cilium membrane. It carries out the reaction Ca(2+)(in) = Ca(2+)(out). It catalyses the reaction Na(+)(in) = Na(+)(out). The catalysed reaction is K(+)(in) = K(+)(out). The enzyme catalyses NH4(+)(in) = NH4(+)(out). It carries out the reaction Rb(+)(in) = Rb(+)(out). It catalyses the reaction Li(+)(in) = Li(+)(out). The catalysed reaction is Cs(+)(in) = Cs(+)(out). In terms of biological role, pore-forming subunit of the olfactory cyclic nucleotide-gated channel. Operates in the cilia of olfactory sensory neurons where chemical stimulation of the odorant is converted to an electrical signal. Mediates odorant-induced cAMP-dependent Ca(2+) influx triggering neuron depolarization. The rise of intracellular Ca(2+) levels potentiates the olfactory response by activating Ca(2+)-dependent Cl(-) channels, but it also serves as a negative feedback signal to desensitize the channel for rapid adaptation to odorants. Conducts cAMP- and cGMP-gated ion currents, with permeability for monovalent and divalent cations. The polypeptide is Cyclic nucleotide-gated channel alpha-2 (Mus musculus (Mouse)).